Here is a 318-residue protein sequence, read N- to C-terminus: MRLAPLYRNALLLTGLLLSGIAAVQAADWPRQITDSRGTHTLESQPQRIVSTSVTLTGSLLAIDAPVIASGATTPNNRVADDQGFLRQWSKVAKERKLQRLYIGEPSAEAVAAQMPDLILISATGGDSALALYDQLSTIAPTLIINYDDKSWQSLLTQLGEITGHEKQAAERIAQFDKQLAAAKEQIKLPPQPVTAIVYTAAAHSANLWTPESAQGQMLEQLGFTLAKLPAGLNASQSQGKRHDIIQLGGENLAAGLNGESLFLFAGDQKDADAIYANPLLAHLPAVQNKQVYALGTETFRLDYYSAMQVLDRLKALF.

A signal peptide spans 1-26 (MRLAPLYRNALLLTGLLLSGIAAVQA). One can recognise a Fe/B12 periplasmic-binding domain in the interval 48–318 (RIVSTSVTLT…QVLDRLKALF (271 aa)).

Belongs to the bacterial solute-binding protein 8 family. As to quaternary structure, the complex is composed of two ATP-binding proteins (FepC), two transmembrane proteins (FepD and FepG) and a solute-binding protein (FepB).

It is found in the periplasm. In terms of biological role, part of the ABC transporter complex FepBDGC involved in ferric enterobactin uptake. Binds ferric enterobactin. The polypeptide is Ferric enterobactin-binding periplasmic protein FepB (fepB) (Escherichia coli O6:H1 (strain CFT073 / ATCC 700928 / UPEC)).